We begin with the raw amino-acid sequence, 187 residues long: Peptidyl-tRNA hydrolase (187 aa).

Residue tyrosine 14 participates in tRNA binding. The active-site Proton acceptor is the histidine 19. TRNA contacts are provided by tyrosine 64, asparagine 66, and asparagine 112.

It belongs to the PTH family. Monomer.

The protein localises to the cytoplasm. The enzyme catalyses an N-acyl-L-alpha-aminoacyl-tRNA + H2O = an N-acyl-L-amino acid + a tRNA + H(+). Functionally, hydrolyzes ribosome-free peptidyl-tRNAs (with 1 or more amino acids incorporated), which drop off the ribosome during protein synthesis, or as a result of ribosome stalling. Its function is as follows. Catalyzes the release of premature peptidyl moieties from peptidyl-tRNA molecules trapped in stalled 50S ribosomal subunits, and thus maintains levels of free tRNAs and 50S ribosomes. In Clostridium acetobutylicum (strain ATCC 824 / DSM 792 / JCM 1419 / IAM 19013 / LMG 5710 / NBRC 13948 / NRRL B-527 / VKM B-1787 / 2291 / W), this protein is Peptidyl-tRNA hydrolase.